The chain runs to 544 residues: Protein angel homolog 2 (544 aa).

Belongs to the CCR4/nocturin family.

The chain is Protein angel homolog 2 (ANGEL2) from Homo sapiens (Human).